Here is a 347-residue protein sequence, read N- to C-terminus: Glycerol-3-phosphate dehydrogenase [NAD(P)+] (347 aa).

Trp20, Arg39, and Lys118 together coordinate NADPH. The sn-glycerol 3-phosphate site is built by Lys118, Gly152, and Ser154. Ala156 contributes to the NADPH binding site. Residues Lys207, Asp260, Ser270, Arg271, and Asn272 each coordinate sn-glycerol 3-phosphate. Residue Lys207 is the Proton acceptor of the active site. NADPH is bound at residue Arg271. Residues Val295 and Glu297 each coordinate NADPH.

This sequence belongs to the NAD-dependent glycerol-3-phosphate dehydrogenase family.

The protein localises to the cytoplasm. The catalysed reaction is sn-glycerol 3-phosphate + NAD(+) = dihydroxyacetone phosphate + NADH + H(+). It catalyses the reaction sn-glycerol 3-phosphate + NADP(+) = dihydroxyacetone phosphate + NADPH + H(+). It participates in membrane lipid metabolism; glycerophospholipid metabolism. Catalyzes the reduction of the glycolytic intermediate dihydroxyacetone phosphate (DHAP) to sn-glycerol 3-phosphate (G3P), the key precursor for phospholipid synthesis. The chain is Glycerol-3-phosphate dehydrogenase [NAD(P)+] from Cupriavidus pinatubonensis (strain JMP 134 / LMG 1197) (Cupriavidus necator (strain JMP 134)).